The chain runs to 1337 residues: Nucleoporin POM152 (1337 aa).

A disordered region spans residues 1–48 (MEHRYNVFNDTPRGNHWMGSSVSGSPRPSYSSRPNVNTTRRFQYSDDE). The Cytoplasmic segment spans residues 1-110 (MEHRYNVFND…TDVLEISKQR (110 aa)). Residues 1-175 (MEHRYNVFND…SFNIPRLTFK (175 aa)) form a pore side region. Low complexity predominate over residues 19–37 (GSSVSGSPRPSYSSRPNVN). Ser-45 and Ser-60 each carry phosphoserine. Residues 111 to 131 (TFAVILFLIIQCYKIYDLVIL) traverse the membrane as a helical segment. Residues 132–148 (KSGLPLSGLLFKNYRFN) are Perinuclear space-facing. A helical membrane pass occupies residues 149–169 (FISKYFIIDSFFLYVLPSFNI). At 170–172 (PRL) the chain is on the cytoplasmic side. Residues 173–193 (TFKPWVVYLQILAMLLLNIFI) form a helical membrane-spanning segment. Residues 194-1337 (SSDHEFVLIS…FAKNDLFFNN (1144 aa)) lie on the Perinuclear space side of the membrane. Positions 196-1337 (DHEFVLISLI…FAKNDLFFNN (1142 aa)) are cisternal side. N-linked (GlcNAc...) asparagine glycosylation is present at Asn-280. 8 repeat units span residues 390 to 413 (DRCIGDSDNVSFEIQGVPPMKLAY), 626 to 650 (DQCVGQVGLNFELSFTGAPPYYYNT), 732 to 755 (KLCLGDHSSVPVALKGQGPFTLTY), 836 to 859 (KIKHGSVTEIPLKLSGEGPFTVKF), 943 to 966 (EVCQGMEGTVDLALFGSPPFILEY), 1058 to 1077 (FLEPINLKFLQGESPFSITF), 1157 to 1178 (EYCVGDYVAYQLNGVAPFMIKY), and 1253 to 1276 (DIREGDQAEVIFSFEGTPPFSLTY). Residues 390–1276 (DRCIGDSDNV…EGTPPFSLTY (887 aa)) are 8 X 24 AA approximate repeats.

In terms of assembly, component of the nuclear pore complex (NPC). NPC constitutes the exclusive means of nucleocytoplasmic transport. NPCs allow the passive diffusion of ions and small molecules and the active, nuclear transport receptor-mediated bidirectional transport of macromolecules such as proteins, RNAs, ribonucleoparticles (RNPs), and ribosomal subunits across the nuclear envelope. Due to its 8-fold rotational symmetry, all subunits are present with 8 copies or multiples thereof. Interacts with NUP188. Post-translationally, the N-terminus is blocked. Phosphorylated by CDC28.

It localises to the nucleus. The protein resides in the nuclear pore complex. The protein localises to the nucleus membrane. In terms of biological role, functions as a component of the nuclear pore complex (NPC). NPC components, collectively referred to as nucleoporins (NUPs), can play the role of both NPC structural components and of docking or interaction partners for transiently associated nuclear transport factors. POM152 is important for the de novo assembly of NPCs. This chain is Nucleoporin POM152 (POM152), found in Saccharomyces cerevisiae (strain ATCC 204508 / S288c) (Baker's yeast).